The primary structure comprises 349 residues: Hydroxymethylglutaryl-CoA synthase (349 aa).

(3S)-3-hydroxy-3-methylglutaryl-CoA is bound by residues Asp-29 and Ala-30. The active-site Proton donor/acceptor is the Glu-81. Residues Cys-113 and Thr-154 each coordinate (3S)-3-hydroxy-3-methylglutaryl-CoA. Catalysis depends on Cys-113, which acts as the Acyl-thioester intermediate. Arg-202 is a CoA binding site. The (3S)-3-hydroxy-3-methylglutaryl-CoA site is built by Thr-204 and His-237. The active-site Proton donor/acceptor is the His-237. Residue Lys-242 participates in CoA binding. 3 residues coordinate (3S)-3-hydroxy-3-methylglutaryl-CoA: Arg-246, Asn-269, and Ser-299.

It belongs to the thiolase-like superfamily. Archaeal HMG-CoA synthase family. In terms of assembly, interacts with acetoacetyl-CoA thiolase that catalyzes the precedent step in the pathway and with a DUF35 protein. The acetoacetyl-CoA thiolase/HMG-CoA synthase complex channels the intermediate via a fused CoA-binding site, which allows for efficient coupling of the endergonic thiolase reaction with the exergonic HMGCS reaction.

The enzyme catalyses acetoacetyl-CoA + acetyl-CoA + H2O = (3S)-3-hydroxy-3-methylglutaryl-CoA + CoA + H(+). It functions in the pathway metabolic intermediate biosynthesis; (R)-mevalonate biosynthesis; (R)-mevalonate from acetyl-CoA: step 2/3. Catalyzes the condensation of acetyl-CoA with acetoacetyl-CoA to form 3-hydroxy-3-methylglutaryl-CoA (HMG-CoA). Functions in the mevalonate (MVA) pathway leading to isopentenyl diphosphate (IPP), a key precursor for the biosynthesis of isoprenoid compounds that are building blocks of archaeal membrane lipids. The polypeptide is Hydroxymethylglutaryl-CoA synthase (Methanococcoides burtonii (strain DSM 6242 / NBRC 107633 / OCM 468 / ACE-M)).